A 217-amino-acid polypeptide reads, in one-letter code: Large ribosomal subunit protein uL16 (217 aa).

The protein belongs to the universal ribosomal protein uL16 family. As to quaternary structure, component of the small ribosomal subunit. Mature ribosomes consist of a small (40S) and a large (60S) subunit. The 40S subunit contains about 33 different proteins and 1 molecule of RNA (18S). The 60S subunit contains about 49 different proteins and 3 molecules of RNA (25S, 5.8S and 5S).

In Dictyostelium discoideum (Social amoeba), this protein is Large ribosomal subunit protein uL16 (rpl10).